Reading from the N-terminus, the 462-residue chain is MECPEGQLPISSENDSTPTVSTSEVTSQQEPQILVDRGSETTYESSADIAGDEGTQIPADEDTQTDADSSAQAAAQAPENFQEGKDMSESQDEVPDEVENQFILRLPLEHACTVRNLARSQSVKMKDKLKIDLLPDGRHAVVEVEDVPLAAKLVDLPCVIESLRTLDKKTFYKTADISQMLVCTADGDIHLSPEEPAASTDPNIVRKKERGREEKCVWKHGITPPLKNVRKKRFRKTQKKVPDVKEMEKSSFTEYIESPDVENEVKRLLRSDAEAVSTRWEVIAEDGTKEIESQGSIPGFLISSGMSSHKQGHTSSEYDMLREMFSDSRSNNDDDEDEDDEDEDEDEDEDEDEDKEEEEEDCSEEYLERQLQAEFIESGQYRANEGTSSIVMEIQKQIEKKEKKLHKIQNKAQRQKDLIMKVENLTLKNHFQSVLEQLELQEKQKNEKLISLQEQLQRFLKK.

2 disordered regions span residues 1 to 97 and 327 to 366; these read MECP…VPDE and DSRS…SEEY. Composition is skewed to low complexity over residues 16-30 and 66-77; these read STPT…SQQE and DADSSAQAAAQA. Over residues 333–365 the composition is skewed to acidic residues; it reads DDDEDEDDEDEDEDEDEDEDEDKEEEEEDCSEE. A coiled-coil region spans residues 342–462; it reads DEDEDEDEDE…QEQLQRFLKK (121 aa).

The protein belongs to the TAF7 family. In terms of assembly, TFIID is composed of TATA binding protein (TBP) and a number of TBP-associated factors (TAFs). TAF7L may replace TAF7 in a spermatogenesis-specific form of TFIID. Interacts with TBP; the interaction occurs in a sub-population of cells (pachytene and haploid round spermatids) and is developmentally regulated through differential intracellular localization of the two proteins. Interacts with TAF1. As to expression, testis-specific.

Its subcellular location is the nucleus. The protein localises to the cytoplasm. In terms of biological role, probably functions as a spermatogenesis-specific component of the DNA-binding general transcription factor complex TFIID, a multimeric protein complex that plays a central role in mediating promoter responses to various activators and repressors. May play a role in spermatogenesis. This chain is Transcription initiation factor TFIID subunit 7-like (TAF7L), found in Homo sapiens (Human).